A 167-amino-acid polypeptide reads, in one-letter code: Phospholipase A2 imperatoxin-1 (167 aa).

Residues Trp38, Gly40, and Gly42 each coordinate Ca(2+). Intrachain disulfides connect Cys39-Cys61, Cys60-Cys99, Cys67-Cys92, Cys90-Cys127, and Cys132-Cys144. His64 is an active-site residue. Residue Asp65 participates in Ca(2+) binding. A glycan (N-linked (GlcNAc...) asparagine) is linked at Asn102. Residues 136 to 140 (RRLAR) constitute a propeptide that is removed on maturation.

Belongs to the phospholipase A2 family. Group III subfamily. In terms of assembly, heterodimer composed of a large subunit and a small subunit; disulfide-linked. The cofactor is Ca(2+). In terms of tissue distribution, expressed by the venom gland.

The protein resides in the secreted. It carries out the reaction a 1,2-diacyl-sn-glycero-3-phosphocholine + H2O = a 1-acyl-sn-glycero-3-phosphocholine + a fatty acid + H(+). Phospholipase toxin, which may catalyze the calcium-dependent hydrolysis of the 2-acyl groups in 3-sn-phosphoglycerides. Inhibits both skeletal (RYR1) and cardiac (RYR2) ryanodine receptors (calcium release channels). Probably blocks ryanodine receptors by generating a lipid product. The polypeptide is Phospholipase A2 imperatoxin-1 (Pandinus imperator (Emperor scorpion)).